The primary structure comprises 326 residues: GTP 3',8-cyclase (326 aa).

Residues glycine 7 to arginine 232 form the Radical SAM core domain. Arginine 16 contacts GTP. Positions 23 and 27 each coordinate [4Fe-4S] cluster. Tyrosine 29 serves as a coordination point for S-adenosyl-L-methionine. Cysteine 30 serves as a coordination point for [4Fe-4S] cluster. A GTP-binding site is contributed by arginine 65. Glycine 69 serves as a coordination point for S-adenosyl-L-methionine. Position 96 (threonine 96) interacts with GTP. Residue serine 120 coordinates S-adenosyl-L-methionine. A GTP-binding site is contributed by lysine 157. An S-adenosyl-L-methionine-binding site is contributed by methionine 191. The [4Fe-4S] cluster site is built by cysteine 254 and cysteine 257. Arginine 259–arginine 261 is a binding site for GTP. Cysteine 271 contacts [4Fe-4S] cluster.

Belongs to the radical SAM superfamily. MoaA family. In terms of assembly, monomer and homodimer. [4Fe-4S] cluster is required as a cofactor.

It catalyses the reaction GTP + AH2 + S-adenosyl-L-methionine = (8S)-3',8-cyclo-7,8-dihydroguanosine 5'-triphosphate + 5'-deoxyadenosine + L-methionine + A + H(+). Its pathway is cofactor biosynthesis; molybdopterin biosynthesis. Catalyzes the cyclization of GTP to (8S)-3',8-cyclo-7,8-dihydroguanosine 5'-triphosphate. The chain is GTP 3',8-cyclase from Stenotrophomonas maltophilia (strain R551-3).